Reading from the N-terminus, the 599-residue chain is Adenine deaminase (599 aa).

This sequence belongs to the metallo-dependent hydrolases superfamily. Adenine deaminase family. Requires Mn(2+) as cofactor.

It carries out the reaction adenine + H2O + H(+) = hypoxanthine + NH4(+). This chain is Adenine deaminase, found in Clostridium botulinum (strain 657 / Type Ba4).